The chain runs to 320 residues: ATP-dependent 6-phosphofructokinase (320 aa).

Gly11 is a binding site for ATP. Residue 21–25 (RAVTK) coordinates ADP. ATP contacts are provided by residues 72-73 (RF) and 102-105 (GDGS). Asp103 is a binding site for Mg(2+). 125–127 (TID) is a binding site for substrate. Asp127 functions as the Proton acceptor in the catalytic mechanism. Arg154 contributes to the ADP binding site. Residues Arg162 and 169-171 (MGR) each bind substrate. ADP is bound by residues 185-187 (GAD) and 213-215 (KDH). Substrate-binding positions include Glu222, Arg243, and 249–252 (HMQR).

Belongs to the phosphofructokinase type A (PFKA) family. ATP-dependent PFK group I subfamily. Prokaryotic clade 'B1' sub-subfamily. Homotetramer. Mg(2+) is required as a cofactor.

The protein resides in the cytoplasm. It carries out the reaction beta-D-fructose 6-phosphate + ATP = beta-D-fructose 1,6-bisphosphate + ADP + H(+). It functions in the pathway carbohydrate degradation; glycolysis; D-glyceraldehyde 3-phosphate and glycerone phosphate from D-glucose: step 3/4. Its activity is regulated as follows. Allosterically activated by ADP and other diphosphonucleosides, and allosterically inhibited by phosphoenolpyruvate. Functionally, catalyzes the phosphorylation of D-fructose 6-phosphate to fructose 1,6-bisphosphate by ATP, the first committing step of glycolysis. The sequence is that of ATP-dependent 6-phosphofructokinase from Lactobacillus acidophilus (strain ATCC 700396 / NCK56 / N2 / NCFM).